Reading from the N-terminus, the 1198-residue chain is Tetratricopeptide repeat protein 17 (1198 aa).

A TPR 1 repeat occupies 295 to 328; sequence FTSYYTLGNIYAMLGEYNHSVLCYDHALQAKPGF. Positions 340–382 form a coiled coil; that stretch reads CQQKLEQKLEAQHRSLQRTLNELKEYQKQHDHYLRQQEILEKH. 2 TPR repeats span residues 619 to 652 and 689 to 722; these read WLILNEAGLYWRAVGNSTFAIACLQRALNLAPVQ and PLTFLSLGNAYLALKNVSGALEAFRQALKLTTRC. Disordered stretches follow at residues 771-825 and 903-924; these read PQSL…KSEE and KKPKGDHKKPPGKKVEASQAEN. The span at 903-914 shows a compositional bias: basic residues; that stretch reads KKPKGDHKKPPG. TPR repeat units lie at residues 1071–1105, 1108–1141, and 1142–1175; these read SWVLSSMAALYWRVKGQGKKAIDCLRQALHYAPHQ, DVPLISLANILHNAKLWNDAVVVATMAVEIAPHF, and AVNHFTLGNVYVAMEEFEKALVWYESTLKLQPEF.

Belongs to the TTC17 family. In terms of assembly, interacts with CATIP. Expressed in germ cells as well as in somatic cells of the testis (at protein level). Ubiquitous.

Its subcellular location is the cytoplasm. The protein localises to the cell membrane. The protein resides in the cytoskeleton. Plays a role in primary ciliogenesis by modulating actin polymerization. This Rattus norvegicus (Rat) protein is Tetratricopeptide repeat protein 17 (Ttc17).